Here is a 151-residue protein sequence, read N- to C-terminus: Hemoglobin-2 (151 aa).

The residue at position 2 (Thr2) is an N-acetylthreonine. The Globin domain maps to 3–148 (TLTNPQKAAI…ICKTLGDYMK (146 aa)). Position 97 (His97) interacts with heme b.

Belongs to the globin family. As to quaternary structure, homotetramer.

Its subcellular location is the cytoplasm. This chain is Hemoglobin-2, found in Phacoides pectinatus (Thick lucine).